The chain runs to 305 residues: MKKILLAIGALVTAVIAIGIVFSHMILFIKKKTDEDIIKRETDNGHDVFESFEQMEKTAFVIPSAYGYDIKGYHVAPHDTPNTIIICHGVTMNVLNSLKYMHLFLDLGWNVLIYDHRRHGQSGGKTTSYGFYEKDDLNKVVSLLKNKTNHRGLIGIHGESMGAVTALLYAGAHCSDGADFYIADCPFACFDEQLAYRLRAEYRLPSWPLLPIADFFLKLRGGYRAREVSPLAVIDKIEKPVLFIHSKDDDYIPVSSTERLYEKKRGPKALYIAENGEHAMSYTKNRHTYRKTVQEFLDNMNDSTE.

A helical transmembrane segment spans residues 8-28 (IGALVTAVIAIGIVFSHMILF).

Its subcellular location is the membrane. This is an uncharacterized protein from Bacillus subtilis (strain 168).